A 285-amino-acid chain; its full sequence is MAAFATKQSPLLLASLLILIGVATGSFYDSFDITWGAGRANIFESGQLLTCTLDKTSGSGFQSKKEYLFGKIDMKIKLVPGNSAGTVTAYYLSSKGETWDEIDFEFLGNVTGQPYVIHTNVFTGGKGNREMQFYLWFDPTADFHTYTVLWNPLNIIFLVDGIPIRVFKNNEANGVAYPKSQPMKIYSSLWEADDWATQGGKVKTDWTNAPFSASYRSFNDVDCCSRTSIWNWVTCNANSNSWMWTTLNSNQLGQLKWVQKDYMIYNYCTDFKRFPQGLPTECNLN.

The signal sequence occupies residues 1 to 25 (MAAFATKQSPLLLASLLILIGVATG). A GH16 domain is found at 26–215 (SFYDSFDITW…WTNAPFSASY (190 aa)). The Nucleophile role is filled by glutamate 101. Glutamate 105 serves as the catalytic Proton donor. Glutamate 105 contacts xyloglucan. Asparagine 109 carries an N-linked (GlcNAc...) asparagine glycan. Xyloglucan-binding positions include 118 to 120 (HTN), 128 to 130 (NRE), 194 to 195 (DW), and glycine 199. Cystine bridges form between cysteine 224–cysteine 235 and cysteine 268–cysteine 282. Arginine 273 serves as a coordination point for xyloglucan.

The protein belongs to the glycosyl hydrolase 16 family. XTH group 2 subfamily. Contains at least one intrachain disulfide bond essential for its enzymatic activity. In terms of tissue distribution, root specific.

The protein localises to the secreted. The protein resides in the cell wall. It localises to the extracellular space. It is found in the apoplast. It catalyses the reaction breaks a beta-(1-&gt;4) bond in the backbone of a xyloglucan and transfers the xyloglucanyl segment on to O-4 of the non-reducing terminal glucose residue of an acceptor, which can be a xyloglucan or an oligosaccharide of xyloglucan.. Catalyzes xyloglucan endohydrolysis (XEH) and/or endotransglycosylation (XET). Cleaves and religates xyloglucan polymers, an essential constituent of the primary cell wall, and thereby participates in cell wall construction of growing tissues. In Arabidopsis thaliana (Mouse-ear cress), this protein is Probable xyloglucan endotransglucosylase/hydrolase protein 12 (XTH12).